We begin with the raw amino-acid sequence, 194 residues long: Large ribosomal subunit protein uL6x (194 aa).

At threonine 75 the chain carries Phosphothreonine.

Belongs to the universal ribosomal protein uL6 family.

The sequence is that of Large ribosomal subunit protein uL6x (RPL9D) from Arabidopsis thaliana (Mouse-ear cress).